The following is a 123-amino-acid chain: Large ribosomal subunit protein bL12 (123 aa).

It belongs to the bacterial ribosomal protein bL12 family. Homodimer. Part of the ribosomal stalk of the 50S ribosomal subunit. Forms a multimeric L10(L12)X complex, where L10 forms an elongated spine to which 2 to 4 L12 dimers bind in a sequential fashion. Binds GTP-bound translation factors.

Forms part of the ribosomal stalk which helps the ribosome interact with GTP-bound translation factors. Is thus essential for accurate translation. The chain is Large ribosomal subunit protein bL12 from Geobacillus thermodenitrificans (strain NG80-2).